The primary structure comprises 911 residues: Protein argonaute 4B (911 aa).

Disordered regions lie at residues 1–51 (MDAH…RPGL) and 149–171 (KTAA…KRVR). The PAZ domain occupies 281–396 (PVIDFLLANQ…FPIELCSLIP (116 aa)). Residues 565-872 (FLLCLLPERK…AAAQVGTFLK (308 aa)) form the Piwi domain.

It belongs to the argonaute family. Ago subfamily.

Functionally, probably involved in the RNA silencing pathway. May bind to short RNAs such as microRNAs (miRNAs) or short interfering RNAs (siRNAs), and represses the translation of mRNAs which are complementary to them. This chain is Protein argonaute 4B (AGO4B), found in Oryza sativa subsp. japonica (Rice).